The sequence spans 355 residues: Glucose-1-phosphate thymidylyltransferase (355 aa).

Residues Asp-107 and Asp-220 each coordinate Mg(2+).

This sequence belongs to the glucose-1-phosphate thymidylyltransferase family. Mg(2+) serves as cofactor.

The enzyme catalyses dTTP + alpha-D-glucose 1-phosphate + H(+) = dTDP-alpha-D-glucose + diphosphate. It participates in antibiotic biosynthesis; streptomycin biosynthesis. Functionally, involved in the biosynthesis of the streptose moiety of streptomycin. Catalyzes the formation of dTDP-glucose, from dTTP and glucose 1-phosphate, as well as its pyrophosphorolysis. In Streptomyces griseus, this protein is Glucose-1-phosphate thymidylyltransferase (strD).